A 153-amino-acid chain; its full sequence is Interleukin-4 (153 aa).

The signal sequence occupies residues 1–24 (MGLTSQLLPPLFFLLACAGNFAHG). 3 disulfide bridges follow: Cys27-Cys151, Cys48-Cys89, and Cys70-Cys123. Asn62 carries N-linked (GlcNAc...) asparagine glycosylation.

This sequence belongs to the IL-4/IL-13 family.

It is found in the secreted. Functionally, participates in at least several B-cell activation processes as well as of other cell types. It is a costimulator of DNA-synthesis. It induces the expression of class II MHC molecules on resting B-cells. It enhances both secretion and cell surface expression of IgE and IgG1. It also regulates the expression of the low affinity Fc receptor for IgE (CD23) on both lymphocytes and monocytes. Positively regulates IL31RA expression in macrophages. Stimulates autophagy in dendritic cells by interfering with mTORC1 signaling and through the induction of RUFY4. This is Interleukin-4 (IL4) from Cercocebus atys (Sooty mangabey).